The sequence spans 360 residues: Phospho-N-acetylmuramoyl-pentapeptide-transferase (360 aa).

10 helical membrane-spanning segments follow: residues Arg25–Ile45, Thr73–Leu93, Tyr97–Tyr117, Trp132–Ala152, Val168–Ser188, Gly199–Ser219, Ala236–Phe256, Val263–Ile283, Ile288–Val308, and Val338–Lys358.

This sequence belongs to the glycosyltransferase 4 family. MraY subfamily. Requires Mg(2+) as cofactor.

It localises to the cell inner membrane. The catalysed reaction is UDP-N-acetyl-alpha-D-muramoyl-L-alanyl-gamma-D-glutamyl-meso-2,6-diaminopimeloyl-D-alanyl-D-alanine + di-trans,octa-cis-undecaprenyl phosphate = di-trans,octa-cis-undecaprenyl diphospho-N-acetyl-alpha-D-muramoyl-L-alanyl-D-glutamyl-meso-2,6-diaminopimeloyl-D-alanyl-D-alanine + UMP. Its pathway is cell wall biogenesis; peptidoglycan biosynthesis. Catalyzes the initial step of the lipid cycle reactions in the biosynthesis of the cell wall peptidoglycan: transfers peptidoglycan precursor phospho-MurNAc-pentapeptide from UDP-MurNAc-pentapeptide onto the lipid carrier undecaprenyl phosphate, yielding undecaprenyl-pyrophosphoryl-MurNAc-pentapeptide, known as lipid I. The chain is Phospho-N-acetylmuramoyl-pentapeptide-transferase from Pseudomonas fluorescens (strain ATCC BAA-477 / NRRL B-23932 / Pf-5).